The following is a 421-amino-acid chain: FBD-associated F-box protein At5g56370 (421 aa).

Residues 1–52 (MDSISLLPDDFLLRILSLLPTKDVLNTSVLSKRWRYLWKLVPKLQYSLIDKN) enclose the F-box domain. Positions 332 to 382 (HWEEPSSVPETLMFVLETLEWRNYRGLKMENELASFLLKHSRRLKIATFSP) constitute an FBD domain.

The polypeptide is FBD-associated F-box protein At5g56370 (Arabidopsis thaliana (Mouse-ear cress)).